A 42-amino-acid polypeptide reads, in one-letter code: Protein MGF 360-20R (42 aa).

This sequence belongs to the asfivirus MGF 360 family.

In terms of biological role, plays a role in virus cell tropism, and may be required for efficient virus replication in macrophages. This chain is Protein MGF 360-20R, found in African swine fever virus (strain Badajoz 1971 Vero-adapted) (Ba71V).